A 435-amino-acid chain; its full sequence is Probable alpha-galactosidase B (435 aa).

Residues 1-18 (MLTSLSLTALALLPSANA) form the signal peptide. The cysteines at positions 41 and 73 are disulfide-linked. Asn-81 is a glycosylation site (N-linked (GlcNAc...) asparagine). Cysteines 123 and 153 form a disulfide. Asp-151 acts as the Nucleophile in catalysis. N-linked (GlcNAc...) asparagine glycans are attached at residues Asn-158 and Asn-176. 221–225 (DWGQA) serves as a coordination point for substrate. Residue Asn-232 is glycosylated (N-linked (GlcNAc...) asparagine). Asp-243 serves as the catalytic Proton donor. N-linked (GlcNAc...) asparagine glycosylation occurs at Asn-378.

This sequence belongs to the glycosyl hydrolase 27 family.

It localises to the secreted. The catalysed reaction is Hydrolysis of terminal, non-reducing alpha-D-galactose residues in alpha-D-galactosides, including galactose oligosaccharides, galactomannans and galactolipids.. Hydrolyzes a variety of simple alpha-D-galactoside as well as more complex molecules such as oligosaccharides and polysaccharides. The polypeptide is Probable alpha-galactosidase B (agl1) (Penicillium simplicissimum).